The sequence spans 57 residues: Protein translocase subunit SecE (57 aa).

The helical transmembrane segment at 30–50 threads the bilayer; sequence LIAGAGIVFVGFLGFLIFAIM.

Belongs to the SecE/SEC61-gamma family. Component of the Sec protein translocase complex. Heterotrimer consisting of SecY (alpha), SecG (beta) and SecE (gamma) subunits. The heterotrimers can form oligomers, although 1 heterotrimer is thought to be able to translocate proteins. Interacts with the ribosome. May interact with SecDF, and other proteins may be involved.

The protein localises to the cell membrane. Functionally, essential subunit of the Sec protein translocation channel SecYEG. Clamps together the 2 halves of SecY. May contact the channel plug during translocation. The protein is Protein translocase subunit SecE of Haloquadratum walsbyi (strain DSM 16790 / HBSQ001).